We begin with the raw amino-acid sequence, 120 residues long: Large ribosomal subunit protein uL18 (120 aa).

The protein belongs to the universal ribosomal protein uL18 family. In terms of assembly, part of the 50S ribosomal subunit; part of the 5S rRNA/L5/L18/L25 subcomplex. Contacts the 5S and 23S rRNAs.

Its function is as follows. This is one of the proteins that bind and probably mediate the attachment of the 5S RNA into the large ribosomal subunit, where it forms part of the central protuberance. The chain is Large ribosomal subunit protein uL18 from Bradyrhizobium sp. (strain ORS 278).